Reading from the N-terminus, the 311-residue chain is L-lactate dehydrogenase 2 (311 aa).

NAD(+) contacts are provided by V14, D35, and R40. R90 lines the substrate pocket. NAD(+) contacts are provided by residues S103, 120–122, and T145; that span reads ATN. 122–125 serves as a coordination point for substrate; it reads NPCD. 150-153 is a substrate binding site; sequence DTTR. The active-site Proton acceptor is H177. T230 lines the substrate pocket.

This sequence belongs to the LDH/MDH superfamily. LDH family. In terms of assembly, homotetramer.

The protein resides in the cytoplasm. The catalysed reaction is (S)-lactate + NAD(+) = pyruvate + NADH + H(+). The protein operates within fermentation; pyruvate fermentation to lactate; (S)-lactate from pyruvate: step 1/1. Functionally, catalyzes the conversion of lactate to pyruvate. The sequence is that of L-lactate dehydrogenase 2 from Listeria innocua serovar 6a (strain ATCC BAA-680 / CLIP 11262).